The primary structure comprises 463 residues: Cytidylate cyclase (463 aa).

Residues 122 to 231 enclose the Guanylate cyclase domain; the sequence is VTMFMDIIGS…IGIRIGIDLG (110 aa). An a ribonucleoside 5'-triphosphate-binding site is contributed by F125. Residues D127, I128, and D171 each contribute to the Mn(2+) site. The segment at 334 to 454 is AGS-C domain; that stretch reads KPSRIKVVIS…VISNDTVIER (121 aa).

The protein belongs to the adenylyl cyclase class-4/guanylyl cyclase family. Pyrimidine cyclase subfamily. In terms of assembly, homodimer. It depends on Mn(2+) as a cofactor.

It localises to the cytoplasm. It carries out the reaction CTP = 3',5'-cyclic CMP + diphosphate. In terms of biological role, pycsar (pyrimidine cyclase system for antiphage resistance) provides immunity against bacteriophage. The pyrimidine cyclase (PycC) synthesizes cyclic nucleotides in response to infection; these serve as specific second messenger signals. The signal activates the adjacent effector, leading to bacterial cell death and abortive phage infection. A clade E Pycsar system. Its function is as follows. The pyrimidine cyclase gene of a two-gene Pycsar system, generates cyclic CMP (cCMP) from CTP in response to bacteriophage infection. Has little to no activity on ATP, GTP or UTP. Expression of this and adjacent effector Ec303145PycTM (AC P0DV27) confers resistance to bacteriophage P1, T5, lambda-vir and phi27. This chain is Cytidylate cyclase, found in Escherichia coli.